Here is a 667-residue protein sequence, read N- to C-terminus: Probable potassium transport system protein Kup (667 aa).

The next 12 helical transmembrane spans lie at 5–25 (GLLI…LYVM), 47–67 (ISLI…IIAL), 88–108 (AAWL…DGTL), 133–153 (VSNQ…LFSI), 164–184 (AFGP…LINI), 210–230 (AGFA…ALYS), 243–263 (SWPF…VWIL), 287–307 (LASI…LITG), 336–356 (IYIP…VLFF), 367–387 (GLSI…WLVL), 393–413 (LANL…MGSS), and 420–440 (GGYV…VWYF).

The protein belongs to the HAK/KUP transporter (TC 2.A.72) family.

The protein localises to the cell membrane. It catalyses the reaction K(+)(in) + H(+)(in) = K(+)(out) + H(+)(out). In terms of biological role, transport of potassium into the cell. Likely operates as a K(+):H(+) symporter. This Lactobacillus delbrueckii subsp. bulgaricus (strain ATCC 11842 / DSM 20081 / BCRC 10696 / JCM 1002 / NBRC 13953 / NCIMB 11778 / NCTC 12712 / WDCM 00102 / Lb 14) protein is Probable potassium transport system protein Kup.